We begin with the raw amino-acid sequence, 270 residues long: Hydroxyethylthiazole kinase (270 aa).

M47 contacts substrate. ATP is bound by residues R123 and T169. G196 provides a ligand contact to substrate.

This sequence belongs to the Thz kinase family. It depends on Mg(2+) as a cofactor.

It carries out the reaction 5-(2-hydroxyethyl)-4-methylthiazole + ATP = 4-methyl-5-(2-phosphooxyethyl)-thiazole + ADP + H(+). Its pathway is cofactor biosynthesis; thiamine diphosphate biosynthesis; 4-methyl-5-(2-phosphoethyl)-thiazole from 5-(2-hydroxyethyl)-4-methylthiazole: step 1/1. Functionally, catalyzes the phosphorylation of the hydroxyl group of 4-methyl-5-beta-hydroxyethylthiazole (THZ). This chain is Hydroxyethylthiazole kinase, found in Roseiflexus sp. (strain RS-1).